A 139-amino-acid polypeptide reads, in one-letter code: Large ribosomal subunit protein uL22c (139 aa).

This sequence belongs to the universal ribosomal protein uL22 family. Part of the 50S ribosomal subunit.

Its subcellular location is the plastid. The protein resides in the chloroplast. This protein binds specifically to 23S rRNA. Its function is as follows. The globular domain of the protein is located near the polypeptide exit tunnel on the outside of the subunit, while an extended beta-hairpin is found that lines the wall of the exit tunnel in the center of the 70S ribosome. This chain is Large ribosomal subunit protein uL22c (rpl22), found in Cycas taitungensis (Prince sago).